Consider the following 412-residue polypeptide: Elongation factor 1-gamma 2 (412 aa).

Ser2 is modified (N-acetylserine). The 76-residue stretch at 2 to 77 (SQGTLYINRS…YLANQVADEK (76 aa)) folds into the GST N-terminal domain. One can recognise a GST C-terminal domain in the interval 86 to 217 (DVIEKSQILR…AEKALTYTPP (132 aa)). The segment at 216-253 (PPKKQKAEKPKAEKSKAEKKKDEAKPADDAAPAKKPKH) is disordered. Residues 220-247 (QKAEKPKAEKSKAEKKKDEAKPADDAAP) are compositionally biased toward basic and acidic residues. An EF-1-gamma C-terminal domain is found at 251 to 412 (PKHPLEALGK…KEIVDGKVLK (162 aa)).

In terms of assembly, the eukaryotic elongation factor 1 complex (eEF1) is probably a heterohexamer. Two trimeric complexes, each composed of eEF1A (TEF1 or TEF2), eEF1Balpha (EFB1) and eEF1Bgamma (CAM1 or TEF4), are probably dimerized via the eF1Bgamma subunits. The eEF1B subcomplex with the GEF activity is formed of eEF1Balpha and eEF1Bgamma. TEF4 interacts with EFB1.

Its subcellular location is the cytoplasm. The protein operates within protein biosynthesis; polypeptide chain elongation. In terms of biological role, subunit of the eukaryotic elongation factor 1 complex (eEF1). Probably plays a role in anchoring the complex to other cellular components. This Saccharomyces cerevisiae (strain ATCC 204508 / S288c) (Baker's yeast) protein is Elongation factor 1-gamma 2 (TEF4).